We begin with the raw amino-acid sequence, 429 residues long: MSKTHLTTEKFAQMGLEPEVLAGLESKGFHYCTPIQALSLPLLVEGHDLAGQAQTGTGKTIAFLAATFNYLLTHPLSNPRLVNQPRAIIMAPTRELAVQIYNDADTISASTGLKLGLAYGGEGYDKQLAVLEQGVDILIGTTGRIIDYFKSKVIDLSNIQVVVLDEADRMFDLGFIKDIRFLFRRMPAPTERLSMLFSATLSLRVQELAYEHMNHPEHVQIEPEQMTGIRIQEELFYPSNEDKMLLLLSLMEEEWPEKAIVFANTKHVCEDVHAWLENDGHRVGLLTGDVPQKKRMKILEDFTKGTLDILVATDVAARGLHIPDVTHVFNYDLPDDAEDYVHRIGRTGRAGKSGHSISLACEDYAFNLPAIEEYIHHPIPVSKYDREALLDDVTAPKRVVRNRQPVNRNMRDRQGGGNSNNRRRPPRKS.

The Q motif signature appears at 9 to 37 (EKFAQMGLEPEVLAGLESKGFHYCTPIQA). Positions 40–219 (LPLLVEGHDL…YEHMNHPEHV (180 aa)) constitute a Helicase ATP-binding domain. An ATP-binding site is contributed by 53 to 60 (AQTGTGKT). The DEAD box signature appears at 165–168 (DEAD). Residues 243–390 (KMLLLLSLME…VSKYDREALL (148 aa)) form the Helicase C-terminal domain. The segment at 395–429 (APKRVVRNRQPVNRNMRDRQGGGNSNNRRRPPRKS) is disordered.

Belongs to the DEAD box helicase family. RhlB subfamily. As to quaternary structure, component of the RNA degradosome, which is a multiprotein complex involved in RNA processing and mRNA degradation.

Its subcellular location is the cytoplasm. It catalyses the reaction ATP + H2O = ADP + phosphate + H(+). Its function is as follows. DEAD-box RNA helicase involved in RNA degradation. Has RNA-dependent ATPase activity and unwinds double-stranded RNA. This Aeromonas salmonicida (strain A449) protein is ATP-dependent RNA helicase RhlB.